A 323-amino-acid chain; its full sequence is Beta-ketoacyl-[acyl-carrier-protein] synthase III (323 aa).

Active-site residues include cysteine 112 and histidine 250. The tract at residues 251 to 255 is ACP-binding; sequence QANYR. Asparagine 280 is a catalytic residue.

Belongs to the thiolase-like superfamily. FabH family. Homodimer.

It is found in the cytoplasm. It carries out the reaction malonyl-[ACP] + acetyl-CoA + H(+) = 3-oxobutanoyl-[ACP] + CO2 + CoA. It participates in lipid metabolism; fatty acid biosynthesis. Functionally, catalyzes the condensation reaction of fatty acid synthesis by the addition to an acyl acceptor of two carbons from malonyl-ACP. Catalyzes the first condensation reaction which initiates fatty acid synthesis and may therefore play a role in governing the total rate of fatty acid production. Possesses both acetoacetyl-ACP synthase and acetyl transacylase activities. Its substrate specificity determines the biosynthesis of branched-chain and/or straight-chain of fatty acids. This is Beta-ketoacyl-[acyl-carrier-protein] synthase III from Clostridium beijerinckii (strain ATCC 51743 / NCIMB 8052) (Clostridium acetobutylicum).